A 619-amino-acid chain; its full sequence is Long-chain fatty acid transport protein 6 (619 aa).

Helical transmembrane passes span 22-42 (LLFP…RYGI) and 119-139 (VHVW…NSNL). 221–232 (YIFTSGTTGLPK) lines the AMP pocket.

Belongs to the ATP-dependent AMP-binding enzyme family.

Its subcellular location is the cell membrane. The protein localises to the sarcolemma. The catalysed reaction is a fatty acid(in) = a fatty acid(out). The enzyme catalyses hexadecanoate(out) = hexadecanoate(in). It catalyses the reaction (9Z,12Z)-octadecadienoate(out) = (9Z,12Z)-octadecadienoate(in). It carries out the reaction (9Z)-octadecenoate(out) = (9Z)-octadecenoate(in). The catalysed reaction is a very long-chain fatty acid + ATP + CoA = a very long-chain fatty acyl-CoA + AMP + diphosphate. The enzyme catalyses tetracosanoate + ATP + CoA = tetracosanoyl-CoA + AMP + diphosphate. It catalyses the reaction a long-chain fatty acid + ATP + CoA = a long-chain fatty acyl-CoA + AMP + diphosphate. It carries out the reaction (9Z)-octadecenoate + ATP + CoA = (9Z)-octadecenoyl-CoA + AMP + diphosphate. The catalysed reaction is (5Z,8Z,11Z,14Z)-eicosatetraenoate + ATP + CoA = (5Z,8Z,11Z,14Z)-eicosatetraenoyl-CoA + AMP + diphosphate. Mediates the import of long-chain fatty acids (LCFA) into the cell by facilitating their transport at the plasma membrane. Also functions as an acyl-CoA ligase catalyzing the ATP-dependent formation of fatty acyl-CoA using LCFA and very-long-chain fatty acids (VLCFA) as substrates. Plays a pivotal role in regulating available LCFA substrates from exogenous sources in tissues undergoing high levels of beta-oxidation such as the heart. The chain is Long-chain fatty acid transport protein 6 (Slc27a6) from Mus musculus (Mouse).